Here is a 70-residue protein sequence, read N- to C-terminus: DNA-directed RNA polymerase subunit epsilon (70 aa).

Belongs to the RNA polymerase subunit epsilon family. In terms of assembly, RNAP is composed of a core of 2 alpha, a beta and a beta' subunit. The core is associated with a delta subunit, and at least one of epsilon or omega. When a sigma factor is associated with the core the holoenzyme is formed, which can initiate transcription.

It carries out the reaction RNA(n) + a ribonucleoside 5'-triphosphate = RNA(n+1) + diphosphate. In terms of biological role, a non-essential component of RNA polymerase (RNAP). The sequence is that of DNA-directed RNA polymerase subunit epsilon from Latilactobacillus sakei subsp. sakei (strain 23K) (Lactobacillus sakei subsp. sakei).